A 281-amino-acid chain; its full sequence is NADPH-dependent 7-cyano-7-deazaguanine reductase (281 aa).

89–91 (VES) is a binding site for substrate. Residue 91-92 (SK) participates in NADPH binding. C188 serves as the catalytic Thioimide intermediate. D195 serves as the catalytic Proton donor. 227–228 (HE) is a substrate binding site. 256–257 (RG) lines the NADPH pocket.

Belongs to the GTP cyclohydrolase I family. QueF type 2 subfamily. As to quaternary structure, homodimer.

It is found in the cytoplasm. It carries out the reaction 7-aminomethyl-7-carbaguanine + 2 NADP(+) = 7-cyano-7-deazaguanine + 2 NADPH + 3 H(+). It participates in tRNA modification; tRNA-queuosine biosynthesis. Its function is as follows. Catalyzes the NADPH-dependent reduction of 7-cyano-7-deazaguanine (preQ0) to 7-aminomethyl-7-deazaguanine (preQ1). The polypeptide is NADPH-dependent 7-cyano-7-deazaguanine reductase (Azoarcus sp. (strain BH72)).